Reading from the N-terminus, the 614-residue chain is Serine/threonine-protein kinase-like protein E (614 aa).

The Protein kinase domain occupies 15–404 (YLIQLHLGQN…NPNTNGAPLS (390 aa)). 21–29 (LGQNSLGQQ) contacts ATP. The span at 256 to 269 (PEQTDNGVGKSSTG) shows a compositional bias: polar residues. The interval 256 to 284 (PEQTDNGVGKSSTGEPPFPTVHQSPESSS) is disordered.

It belongs to the protein kinase superfamily. Ser/Thr protein kinase family.

In terms of biological role, lacks protein kinase activity. The protein is Serine/threonine-protein kinase-like protein E (spkE) of Synechocystis sp. (strain ATCC 27184 / PCC 6803 / Kazusa).